We begin with the raw amino-acid sequence, 249 residues long: 5'-nucleotidase SurE (249 aa).

Asp-9, Asp-10, Ser-40, and Asn-92 together coordinate a divalent metal cation.

This sequence belongs to the SurE nucleotidase family. Requires a divalent metal cation as cofactor.

The protein resides in the cytoplasm. The catalysed reaction is a ribonucleoside 5'-phosphate + H2O = a ribonucleoside + phosphate. Nucleotidase that shows phosphatase activity on nucleoside 5'-monophosphates. The chain is 5'-nucleotidase SurE from Shewanella frigidimarina (strain NCIMB 400).